A 197-amino-acid polypeptide reads, in one-letter code: Transcription factor FapR (197 aa).

Belongs to the FapR family.

Its function is as follows. Transcriptional factor involved in regulation of membrane lipid biosynthesis by repressing genes involved in fatty acid and phospholipid metabolism. The protein is Transcription factor FapR of Bacillus anthracis (strain A0248).